The sequence spans 460 residues: Bifunctional protein GlmU (460 aa).

A pyrophosphorylase region spans residues M1–R232. UDP-N-acetyl-alpha-D-glucosamine contacts are provided by residues L8–G11, K22, Q73, G78–T79, Y100–D102, G137, E157, N172, and N230. D102 provides a ligand contact to Mg(2+). N230 contributes to the Mg(2+) binding site. Residues V233–A253 form a linker region. Residues G254 to K460 are N-acetyltransferase. UDP-N-acetyl-alpha-D-glucosamine contacts are provided by R336 and K354. Catalysis depends on H366, which acts as the Proton acceptor. UDP-N-acetyl-alpha-D-glucosamine is bound by residues Y369 and N380. Residues A383, N389 to Y390, S408, A426, and R443 each bind acetyl-CoA.

This sequence in the N-terminal section; belongs to the N-acetylglucosamine-1-phosphate uridyltransferase family. The protein in the C-terminal section; belongs to the transferase hexapeptide repeat family. In terms of assembly, homotrimer. The cofactor is Mg(2+).

The protein localises to the cytoplasm. It catalyses the reaction alpha-D-glucosamine 1-phosphate + acetyl-CoA = N-acetyl-alpha-D-glucosamine 1-phosphate + CoA + H(+). The catalysed reaction is N-acetyl-alpha-D-glucosamine 1-phosphate + UTP + H(+) = UDP-N-acetyl-alpha-D-glucosamine + diphosphate. It participates in nucleotide-sugar biosynthesis; UDP-N-acetyl-alpha-D-glucosamine biosynthesis; N-acetyl-alpha-D-glucosamine 1-phosphate from alpha-D-glucosamine 6-phosphate (route II): step 2/2. It functions in the pathway nucleotide-sugar biosynthesis; UDP-N-acetyl-alpha-D-glucosamine biosynthesis; UDP-N-acetyl-alpha-D-glucosamine from N-acetyl-alpha-D-glucosamine 1-phosphate: step 1/1. Its pathway is bacterial outer membrane biogenesis; LPS lipid A biosynthesis. Its function is as follows. Catalyzes the last two sequential reactions in the de novo biosynthetic pathway for UDP-N-acetylglucosamine (UDP-GlcNAc). The C-terminal domain catalyzes the transfer of acetyl group from acetyl coenzyme A to glucosamine-1-phosphate (GlcN-1-P) to produce N-acetylglucosamine-1-phosphate (GlcNAc-1-P), which is converted into UDP-GlcNAc by the transfer of uridine 5-monophosphate (from uridine 5-triphosphate), a reaction catalyzed by the N-terminal domain. The protein is Bifunctional protein GlmU of Shewanella baltica (strain OS185).